The chain runs to 296 residues: GTPase Era (296 aa).

An Era-type G domain is found at 7–174; the sequence is KCSMSAIVGA…VDYLCETSPY (168 aa). The G1 stretch occupies residues 15 to 22; the sequence is GATNAGKS. Residue 15-22 participates in GTP binding; the sequence is GATNAGKS. The G2 stretch occupies residues 41 to 45; that stretch reads QTTRV. The G3 stretch occupies residues 62–65; that stretch reads DTPG. Residues 62–66 and 124–127 contribute to the GTP site; these read DTPGI and NKID. The interval 124–127 is G4; sequence NKID. The tract at residues 153–155 is G5; that stretch reads ISA. The KH type-2 domain occupies 205 to 282; that stretch reads LRHELPYSLS…HLFLFVKVRE (78 aa).

This sequence belongs to the TRAFAC class TrmE-Era-EngA-EngB-Septin-like GTPase superfamily. Era GTPase family. Monomer.

The protein localises to the cytoplasm. The protein resides in the cell inner membrane. An essential GTPase that binds both GDP and GTP, with rapid nucleotide exchange. Plays a role in 16S rRNA processing and 30S ribosomal subunit biogenesis and possibly also in cell cycle regulation and energy metabolism. The chain is GTPase Era from Ehrlichia ruminantium (strain Welgevonden).